A 450-amino-acid polypeptide reads, in one-letter code: CBL-interacting protein kinase 23 (450 aa).

One can recognise a Protein kinase domain in the interval 13–268 (YELGRTLGEG…IAELINNEWF (256 aa)). ATP-binding positions include 19–27 (LGEGTFAKV) and K42. D136 functions as the Proton acceptor in the catalytic mechanism. The activation loop stretch occupies residues 154-183 (DFGLSALSQQVREDGLLHTTCGTPNYVAPE). The 26-residue stretch at 306–331 (EERPSVMNAFELISTSQGLNLGTLFE) folds into the NAF domain. The interval 339–368 (KRETRFASRLPANEILSKIEAAAGPMGFNV) is PPI.

It belongs to the protein kinase superfamily. CAMK Ser/Thr protein kinase family. SNF1 subfamily. Mn(2+) is required as a cofactor.

It carries out the reaction L-seryl-[protein] + ATP = O-phospho-L-seryl-[protein] + ADP + H(+). It catalyses the reaction L-threonyl-[protein] + ATP = O-phospho-L-threonyl-[protein] + ADP + H(+). Functionally, CIPK serine-threonine protein kinases interact with CBL proteins. Binding of a CBL protein to the regulatory NAF domain of CIPK protein lead to the activation of the kinase in a calcium-dependent manner. The polypeptide is CBL-interacting protein kinase 23 (CIPK23) (Oryza sativa subsp. japonica (Rice)).